We begin with the raw amino-acid sequence, 131 residues long: MARVKRAVNAHKKRRSILKASKGYRGQRSRLYRKAKEQQLHSLNYAYRDRRARKGEFRKLWISRINAAARANDITYNRLIQGLKAAGVEVDRKNLADIAIADPAAFTALVDVARAALPEDVNAPSDSGEAA.

Belongs to the bacterial ribosomal protein bL20 family.

Binds directly to 23S ribosomal RNA and is necessary for the in vitro assembly process of the 50S ribosomal subunit. It is not involved in the protein synthesizing functions of that subunit. This is Large ribosomal subunit protein bL20 from Mycolicibacterium paratuberculosis (strain ATCC BAA-968 / K-10) (Mycobacterium paratuberculosis).